Here is a 156-residue protein sequence, read N- to C-terminus: Small ribosomal subunit protein uS7 (156 aa).

It belongs to the universal ribosomal protein uS7 family. In terms of assembly, part of the 30S ribosomal subunit. Contacts proteins S9 and S11.

One of the primary rRNA binding proteins, it binds directly to 16S rRNA where it nucleates assembly of the head domain of the 30S subunit. Is located at the subunit interface close to the decoding center, probably blocks exit of the E-site tRNA. This chain is Small ribosomal subunit protein uS7, found in Clostridium kluyveri (strain NBRC 12016).